The sequence spans 123 residues: WAP four-disulfide core domain protein 5 (123 aa).

Residues Met-1–Gly-24 form the signal peptide. WAP domains are found at residues Lys-27–Arg-73 and Val-74–Val-121. Intrachain disulfides connect Cys-34–Cys-62, Cys-41–Cys-66, Cys-49–Cys-61, Cys-55–Cys-70, Cys-81–Cys-109, Cys-88–Cys-113, Cys-96–Cys-108, and Cys-102–Cys-117.

Its subcellular location is the secreted. Functionally, putative acid-stable proteinase inhibitor. The chain is WAP four-disulfide core domain protein 5 (WFDC5) from Aotus nancymaae (Ma's night monkey).